The sequence spans 280 residues: Virginiamycin B lyase (280 aa).

His215 contacts substrate. Position 254 (Glu254) interacts with Mg(2+). His256 functions as the Proton acceptor in the catalytic mechanism. Glu271 provides a ligand contact to Mg(2+).

Belongs to the Vgb family. As to quaternary structure, monomer. Mg(2+) serves as cofactor.

Its function is as follows. Inactivates the type B streptogramin antibiotics by linearizing the lactone ring at the ester linkage, generating a free phenylglycine carboxylate and converting the threonyl moiety into 2-amino-butenoic acid. The sequence is that of Virginiamycin B lyase from Mycobacterium sp. (strain JLS).